The chain runs to 599 residues: Dehydrogenase eriK (599 aa).

A signal peptide spans 1-20 (MAFLKARLAALLSVAVSCSA). FAD-binding positions include 43-44 (TA) and 64-65 (EG). An N-linked (GlcNAc...) asparagine glycan is attached at Asn-93. Residue 122-125 (NGMY) coordinates FAD. Residues Asn-169, Asn-191, Asn-234, Asn-260, Asn-284, Asn-319, Asn-339, Asn-353, Asn-365, Asn-370, Asn-398, Asn-456, and Asn-518 are each glycosylated (N-linked (GlcNAc...) asparagine). Residues Ala-569 and 580–581 (TQ) contribute to the FAD site.

The protein belongs to the GMC oxidoreductase family. In terms of assembly, homodimer. The cofactor is FAD.

Its function is as follows. Dehydrogenase; part of the gene cluster that mediates the biosynthesis of erinacines, cyathane-xylosides that show unique biological activities, including leishmanicidal activity, stimulating activity for nerve growth-factor synthesis, and agonistic activity toward the kappa opioid receptor. The role of the dehydrogenase eriK within the pathway has still to be determined. The first step of the erinacines biosynthesis pathway is catalyzed by the geranylgeranyl diphosphate (GGPP) synthase eriE via conversion of farnesyl pyrophosphate and isopentyl pyrophosphate into geranylgeranyl pyrophosphate (GGPP). GGPP is then substrate of the diterpene cyclase eriG for the production of cyatha-3,12-diene. The cytochrome P450 monooxygenase eriI then hydroxylates cyatha-3,12-diene at C-14 of the seven-membered ring to produce erinacol, which is further hydroxylated at C-15 by the cytochrome P450 monooxygenase eriC to yield cyathadiol. The cytochrome P450 monooxygenase eriA then catalyzes C-11 hydroxylation in the presence of the short chain dehydrogenase/reductase (SDR) eriH, which leads to the production of cyathatriol. The acetyltransferase eriL converts cyathatriol into 11-O-acetyl-cyathatriol. The SDR eriH catalyzes further oxidation of 11-O-acetyl-cyathatriol into 1-O-acetylcyathin A3. Finally, the glycosyl transferase eriJ tranfers xylose from UDP-xylose onto C-14 of 11-O-acetyl-cyathatriol to form eracine Q. EriJ is also able to convert 11-O-acetyl-cyathatriol to eracine Q2 by using UDP-D-glucose as cosubstrate, but at a lower rate. This Hericium erinaceus (Lion's mane mushroom) protein is Dehydrogenase eriK.